We begin with the raw amino-acid sequence, 320 residues long: Malate dehydrogenase (320 aa).

Residues 10–15 (GAGQIG) and Asp34 contribute to the NAD(+) site. Residues Arg83 and Arg89 each coordinate substrate. NAD(+) contacts are provided by residues Asn96 and 119-121 (ITN). Positions 121 and 152 each coordinate substrate. The active-site Proton acceptor is the His176.

It belongs to the LDH/MDH superfamily. MDH type 3 family.

The catalysed reaction is (S)-malate + NAD(+) = oxaloacetate + NADH + H(+). In terms of biological role, catalyzes the reversible oxidation of malate to oxaloacetate. This Cereibacter sphaeroides (strain ATCC 17025 / ATH 2.4.3) (Rhodobacter sphaeroides) protein is Malate dehydrogenase.